A 206-amino-acid chain; its full sequence is RNA-free ribonuclease P (206 aa).

The interval 187 to 206 (NLAGDDPGHAPPCGPDQPAG) is disordered. Pro residues predominate over residues 195–206 (HAPPCGPDQPAG).

The protein belongs to the HARP family.

The enzyme catalyses Endonucleolytic cleavage of RNA, removing 5'-extranucleotides from tRNA precursor.. Its function is as follows. RNA-free RNase P that catalyzes the removal of the 5'-leader sequence from pre-tRNA to produce the mature 5'-terminus. The chain is RNA-free ribonuclease P from Halorhodospira halophila (strain DSM 244 / SL1) (Ectothiorhodospira halophila (strain DSM 244 / SL1)).